Consider the following 172-residue polypeptide: Large ribosomal subunit protein uL10 (172 aa).

The protein belongs to the universal ribosomal protein uL10 family. In terms of assembly, part of the ribosomal stalk of the 50S ribosomal subunit. The N-terminus interacts with L11 and the large rRNA to form the base of the stalk. The C-terminus forms an elongated spine to which L12 dimers bind in a sequential fashion forming a multimeric L10(L12)X complex.

Functionally, forms part of the ribosomal stalk, playing a central role in the interaction of the ribosome with GTP-bound translation factors. The sequence is that of Large ribosomal subunit protein uL10 from Prosthecochloris aestuarii (strain DSM 271 / SK 413).